The chain runs to 156 residues: Transcription antitermination protein NusB (156 aa).

The protein belongs to the NusB family.

Functionally, involved in transcription antitermination. Required for transcription of ribosomal RNA (rRNA) genes. Binds specifically to the boxA antiterminator sequence of the ribosomal RNA (rrn) operons. This Syntrophotalea carbinolica (strain DSM 2380 / NBRC 103641 / GraBd1) (Pelobacter carbinolicus) protein is Transcription antitermination protein NusB.